The primary structure comprises 93 residues: Small ribosomal subunit protein uS19 (93 aa).

Belongs to the universal ribosomal protein uS19 family.

Protein S19 forms a complex with S13 that binds strongly to the 16S ribosomal RNA. This is Small ribosomal subunit protein uS19 from Campylobacter concisus (strain 13826).